The primary structure comprises 683 residues: DNA polymerase alpha-associated DNA helicase A (683 aa).

229 to 236 (GPPGTGKT) serves as a coordination point for ATP.

It belongs to the DNA2/NAM7 helicase family. Associates with the hexameric DNA polymerase alpha.

It localises to the cytoplasm. Its subcellular location is the nucleus. The enzyme catalyses ATP + H2O = ADP + phosphate + H(+). DNA polymerase alpha-associated DNA helicase which may be involved in DNA replication. The protein is DNA polymerase alpha-associated DNA helicase A (HCS1) of Saccharomyces cerevisiae (strain ATCC 204508 / S288c) (Baker's yeast).